The chain runs to 95 residues: Secretoglobin family 2A member 1 (95 aa).

A signal peptide spans 1 to 18 (MKLVFLFLLVTIPICCYA). N-linked (GlcNAc...) asparagine glycans are attached at residues Asn-35 and Asn-72.

It belongs to the secretoglobin family. Lipophilin subfamily. In terms of assembly, prostatein is composed of three different peptides called C1, C2 and C3. These form covalent C1:C3 (F) and C2:C3 (S) heterodimers whose non-covalent association forms tetrameric (C1:C3/C3:C2) prostatein molecules. In terms of tissue distribution, expressed at very low level in ventral prostate.

Its subcellular location is the secreted. Its function is as follows. Part of prostatein which is the major secretory glycoprotein of ventral prostate gland. Steroid-binding protein; can bind non-polar steroids, cholesterol and a group of small proline-rich peptides. In Rattus norvegicus (Rat), this protein is Secretoglobin family 2A member 1.